Reading from the N-terminus, the 389-residue chain is MDGGVGEEGKQQPHLVLAHKLFLLSHPDVDDLAKVDLRADVLAAVKSDDMASLYESLGAGGVLETDAALLAEMRGRIEEEIRKLDEKIADAEENLGESEVREAHLAKSLYFIRVGEKEKALEQLKVTEGKTVAVGQKMDLVFHTLQIGFFYMDFDLISKSIDKAKKLFEEGGDWERKNRLKVYEGLYCMATRNFKKAASLFLDSISTFTTYELFPYDTFIFYTVLTSVISLDRVSLKAKVVDAPEILAVIGKVPHLSEFLNSLYNCQYKSFFAAFSGLTEQIKLDRYLQPHFRYYMREVRTVVYSQFLESYKSVTMEAMASAFGVTVDFIDLELSRFIAAGKLHCKIDKVACVLETNRPDARNAFYQATIKQGDFLLNRIQKLSRVIDL.

The PCI domain maps to 193–361 (NFKKAASLFL…CVLETNRPDA (169 aa)).

This sequence belongs to the proteasome subunit S10 family.

Functionally, acts as a regulatory subunit of the 26S proteasome which is involved in the ATP-dependent degradation of ubiquitinated proteins. This Oryza sativa subsp. japonica (Rice) protein is 26S proteasome non-ATPase regulatory subunit 6 (RPN7).